The chain runs to 330 residues: Phosphate acyltransferase (330 aa).

The protein belongs to the PlsX family. As to quaternary structure, homodimer. Probably interacts with PlsY.

The protein localises to the cytoplasm. The catalysed reaction is a fatty acyl-[ACP] + phosphate = an acyl phosphate + holo-[ACP]. It participates in lipid metabolism; phospholipid metabolism. Its function is as follows. Catalyzes the reversible formation of acyl-phosphate (acyl-PO(4)) from acyl-[acyl-carrier-protein] (acyl-ACP). This enzyme utilizes acyl-ACP as fatty acyl donor, but not acyl-CoA. The polypeptide is Phosphate acyltransferase (Bacillus cereus (strain B4264)).